The sequence spans 143 residues: Submaxillary gland androgen-regulated protein 2, isoform delta (143 aa).

The N-terminal stretch at 1–22 (MKPLCLVFGLCVLIGCFLSSEC) is a signal peptide. 2 disordered regions span residues 28–52 (GQHD…PDPN) and 116–143 (VPRK…TDSF). Composition is skewed to polar residues over residues 36 to 45 (LSPSNPSSHF) and 122 to 143 (NATP…TDSF).

The protein localises to the secreted. Its function is as follows. May play a role in protection or detoxification. The chain is Submaxillary gland androgen-regulated protein 2, isoform delta (Smr2) from Mus musculus (Mouse).